A 254-amino-acid polypeptide reads, in one-letter code: Large ribosomal subunit protein uL2 (254 aa).

Belongs to the universal ribosomal protein uL2 family.

In Eremothecium gossypii (strain ATCC 10895 / CBS 109.51 / FGSC 9923 / NRRL Y-1056) (Yeast), this protein is Large ribosomal subunit protein uL2 (RPL2).